The sequence spans 332 residues: Monoterpene synthase 25 (332 aa).

Residues D115, E180, N240, S244, and E248 each coordinate Mg(2+). Positions 115 to 121 match the DDXXXXD motif motif; the sequence is DDPVVFD. Positions 240 to 248 match the NSE/DTE motif motif; it reads NDILSFYKE.

The protein belongs to the trichodiene synthase family. It depends on Mg(2+) as a cofactor.

In terms of biological role, terpene cyclase that catalyzes the cyclization of geranyl diphosphate (GPP) to myrcene and linalool. The chain is Monoterpene synthase 25 from Postia placenta (strain ATCC 44394 / Madison 698-R) (Brown rot fungus).